Here is a 329-residue protein sequence, read N- to C-terminus: Ubiquinol oxidase 1c, mitochondrial (329 aa).

The transit peptide at 1-45 directs the protein to the mitochondrion; the sequence is MITTLLRRSLLDASKQATSINGILFHQLAPAKYFRVPAVGGLRDF. A helical transmembrane segment spans residues 154-174; sequence AIMLETVAAVPGMVGGMLMHF. The Fe cation site is built by glutamate 158, glutamate 197, and histidine 200. The helical transmembrane segment at 216-236 threads the bilayer; sequence ALVISVQGVFFNAYLIGYIIS. Residues glutamate 248, glutamate 299, and histidine 302 each coordinate Fe cation.

Belongs to the alternative oxidase family. In terms of assembly, homodimer; disulfide-linked. The cofactor is Fe cation. In terms of tissue distribution, expressed in roots, stems, leaves, cotyledons and flowers. High expression in stamens.

It localises to the mitochondrion inner membrane. It catalyses the reaction 2 a ubiquinol + O2 = 2 a ubiquinone + 2 H2O. Catalyzes the cyanide-resistant oxidation of ubiquinol and the reduction of molecular oxygen to water, but does not translocate protons and consequently is not linked to oxidative phosphorylation. May increase respiration when the cytochrome respiratory pathway is restricted, or in response to low temperatures. The chain is Ubiquinol oxidase 1c, mitochondrial (AOX1C) from Arabidopsis thaliana (Mouse-ear cress).